The primary structure comprises 44 residues: MFKLFSTKYMRSAPVVAAAWITMTAGIIIEFNRFFPDLLFHPMS.

The helical transmembrane segment at 9-29 (YMRSAPVVAAAWITMTAGIII) threads the bilayer.

This sequence belongs to the PsaJ family.

The protein resides in the cellular thylakoid membrane. May help in the organization of the PsaE and PsaF subunits. In Prochlorococcus marinus (strain MIT 9312), this protein is Photosystem I reaction center subunit IX.